The sequence spans 183 residues: Protein Syd (183 aa).

Belongs to the Syd family.

The protein resides in the cell inner membrane. In terms of biological role, interacts with the SecY protein in vivo. May bind preferentially to an uncomplexed state of SecY, thus functioning either as a chelating agent for excess SecY in the cell or as a regulatory factor that negatively controls the translocase function. The polypeptide is Protein Syd (Yersinia pestis bv. Antiqua (strain Antiqua)).